Consider the following 309-residue polypeptide: Haloalkane dehalogenase (309 aa).

Residues P37–R148 form the AB hydrolase-1 domain. The Nucleophile role is filled by D110. Residue E134 is the Proton donor of the active site. Catalysis depends on H278, which acts as the Proton acceptor.

The protein belongs to the haloalkane dehalogenase family. Type 2 subfamily. Monomer.

The enzyme catalyses 1-haloalkane + H2O = a halide anion + a primary alcohol + H(+). In terms of biological role, catalyzes hydrolytic cleavage of carbon-halogen bonds in halogenated aliphatic compounds, leading to the formation of the corresponding primary alcohols, halide ions and protons. The sequence is that of Haloalkane dehalogenase from Mesorhizobium japonicum (strain LMG 29417 / CECT 9101 / MAFF 303099) (Mesorhizobium loti (strain MAFF 303099)).